The sequence spans 127 residues: Small ribosomal subunit protein uS11 (127 aa).

It belongs to the universal ribosomal protein uS11 family. Part of the 30S ribosomal subunit. Interacts with proteins S7 and S18. Binds to IF-3.

Located on the platform of the 30S subunit, it bridges several disparate RNA helices of the 16S rRNA. Forms part of the Shine-Dalgarno cleft in the 70S ribosome. The polypeptide is Small ribosomal subunit protein uS11 (Flavobacterium psychrophilum (strain ATCC 49511 / DSM 21280 / CIP 103535 / JIP02/86)).